A 701-amino-acid polypeptide reads, in one-letter code: MTSHGRKVVRVVARVKPSTDLASTKSISVQKPMGDDSETVTISFGAQFAGSKDSYRLDYCYEENETTGSILTKEIKPLISTVFEGKDANVIAHGARNSGKTHLIQGNERELGLAVLTMSEMLSMAEERGDAIFVSVYEVSQETVYDLLDQEKRVVSVLEGAQGKIQLKGLSQVPVKSLSEFQNLYFGFKKSQKLTSDLPTRSHKGVMIHVTTGNANSGSLGRMNFLDMAGYEDSRKQNSALGPLEIARVNKSIYALQNVMYALNANESHVPYRESKLTRMLKDCLKGSNITLLITCLPREFSQDSFYMLNLASRICLGGNRAITNPTKKKINGLDRSVSLSSAAQRRQTPLTMSAASRKQTVLRGNVTERKTKINTATSAIKARKLFGEANDSVKCKNSSKKVEGKAKMVLKKGISTSKVVLSVQASSPKEEICSSITVTDFQSSLVEEEYSLAFSSSTVAMEPGYSNGASLSSEAIYTTDKETPRKQEEMFAGATHCDDAFVDKAQIVERDENNSVIEEDLTLVIDEGENLDKENNSLLANETASPPLSMRLQELSNNLKSICKFSNQLSVPEKHQTPLTILQAEEASEHSDITAEAAVSIELRTPEKTMPSNIGCSPWKTYSAHSSKLKNSAVGEYLKFINTAGKEDLKKLKGIGDKRAAYIVELREESPFKTLDDLQSIGLSAKQVNGLLKKEIGEIF.

The 311-residue stretch at 8-318 folds into the Kinesin motor domain; the sequence is VVRVVARVKP…LNLASRICLG (311 aa). ATP is bound at residue 94 to 101; that stretch reads GARNSGKT.

Belongs to the TRAFAC class myosin-kinesin ATPase superfamily. Kinesin family. KIN-10 subfamily.

The polypeptide is Kinesin-like protein KIN-10C (Arabidopsis thaliana (Mouse-ear cress)).